The following is a 759-amino-acid chain: NADP-dependent malic enzyme (759 aa).

Residues 1-428 form a malic enzyme region; the sequence is MDDQLKQSAL…KLTEFVYKTN (428 aa). The Proton donor role is filled by tyrosine 39. An N6-acetyllysine modification is found at lysine 56. The active-site Proton acceptor is the lysine 94. A divalent metal cation is bound by residues glutamate 136, aspartate 137, and aspartate 162. NADP(+) contacts are provided by residues 195–198, asparagine 288, and asparagine 320; that span reads AGAA. The tract at residues 429–759 is phosphate acetyltransferase; required for oligomerization, inhibition by acetyl-CoA and activation by glutamate, aspartate, and glucose-6-phosphate; the sequence is LFMKPIFSQA…AVVEAQTQPL (331 aa).

It in the N-terminal section; belongs to the malic enzymes family. In the C-terminal section; belongs to the phosphate acetyltransferase and butyryltransferase family. In terms of assembly, homooligomer, possibly an octamer. Requires Mg(2+) as cofactor. Mn(2+) serves as cofactor.

It carries out the reaction (S)-malate + NADP(+) = pyruvate + CO2 + NADPH. It catalyses the reaction oxaloacetate + H(+) = pyruvate + CO2. With respect to regulation, inhibited by 4 mM Mg(2+) and acetyl-CoA, competitively inhibited by fumarate and oxaloacetate. Activated by glutamate and aspartate, glucose-6-phosphate, acetyl-phosphate and 2 mM KCl. Catalyzes the decarboxylation of malate to pyruvate. In vitro, shows malolactic enzyme activity in the presence of NADPH. However, it is unlikely that this activity is of relevance in E.coli, which produces little NADPH. The chain is NADP-dependent malic enzyme (maeB) from Escherichia coli (strain K12).